The primary structure comprises 114 residues: Protein ELF4-LIKE 4 (114 aa).

The disordered stretch occupies residues 87 to 114 (SVDASSEGESSGTLKSDGKANQKRFRSG). A compositionally biased stretch (polar residues) spans 89–100 (DASSEGESSGTL).

The protein belongs to the EARLY FLOWERING 4 family. In terms of assembly, homodimer.

The protein resides in the nucleus. In terms of biological role, component of the central CCA1/LHY-TOC1 feedback loop in the circadian clock that promotes clock accuracy and is required for sustained rhythms in the absence of daily light/dark cycles. In Arabidopsis thaliana (Mouse-ear cress), this protein is Protein ELF4-LIKE 4 (EFL4).